The following is a 137-amino-acid chain: Large ribosomal subunit protein uL16c (137 aa).

Residues 1-21 (MLSPKKTKYRKQHRGRMKGKA) are disordered.

It belongs to the universal ribosomal protein uL16 family. In terms of assembly, part of the 50S ribosomal subunit.

The protein localises to the plastid. The protein resides in the chloroplast. The chain is Large ribosomal subunit protein uL16c from Oedogonium cardiacum (Filamentous green alga).